Reading from the N-terminus, the 286-residue chain is MTKADTIFKENITKIMEEGVWSEQARPKYKDGTTANSKYITGSFAEYDLSKGEFPITTLRPIAIKSAIKEVFWIYQDQTNSLDVLEDKYNVHYWNDWEVEGVPANNGDKRSIGQRYGAVVKKHDIINRLLAQLEANPWNRRNVISLWDYEAFEETAGLQPCAFQTMFDVRRVGEDVYLDGTLTQRSNDMLVAHHINAMQYVALQMMIAKHFGWKVGKFFYFINNLHIYDNQFEQAEELLKRQPSDCQPRLVLNVPDETNFFDIKPEDFELVDYDPVKPQLKFDLAI.

Residue 140–141 (RR) coordinates dUMP. The Nucleophile role is filled by Cys161. Residues 185–188 (RSND), Asn196, and 226–228 (HIY) contribute to the dUMP site. Asp188 contributes to the (6R)-5,10-methylene-5,6,7,8-tetrahydrofolate binding site. Ala285 contacts (6R)-5,10-methylene-5,6,7,8-tetrahydrofolate.

The protein belongs to the thymidylate synthase family. Bacterial-type ThyA subfamily. As to quaternary structure, homodimer.

It is found in the cytoplasm. The enzyme catalyses dUMP + (6R)-5,10-methylene-5,6,7,8-tetrahydrofolate = 7,8-dihydrofolate + dTMP. The protein operates within pyrimidine metabolism; dTTP biosynthesis. Functionally, catalyzes the reductive methylation of 2'-deoxyuridine-5'-monophosphate (dUMP) to 2'-deoxythymidine-5'-monophosphate (dTMP) while utilizing 5,10-methylenetetrahydrofolate (mTHF) as the methyl donor and reductant in the reaction, yielding dihydrofolate (DHF) as a by-product. This enzymatic reaction provides an intracellular de novo source of dTMP, an essential precursor for DNA biosynthesis. This Streptococcus thermophilus (strain ATCC BAA-250 / LMG 18311) protein is Thymidylate synthase.